The sequence spans 162 residues: NADH-quinone oxidoreductase subunit I (162 aa).

4Fe-4S ferredoxin-type domains are found at residues 54–83 and 93–122; these read RRYENGEERCIACKLCEAVCPAMAITIESE and TRYDIDLTKCIFCGFCEESCPVDSIVETQI. [4Fe-4S] cluster-binding residues include C63, C66, C69, C73, C102, C105, C108, and C112.

This sequence belongs to the complex I 23 kDa subunit family. In terms of assembly, NDH-1 is composed of 14 different subunits. Subunits NuoA, H, J, K, L, M, N constitute the membrane sector of the complex. [4Fe-4S] cluster serves as cofactor.

It is found in the cell inner membrane. It carries out the reaction a quinone + NADH + 5 H(+)(in) = a quinol + NAD(+) + 4 H(+)(out). NDH-1 shuttles electrons from NADH, via FMN and iron-sulfur (Fe-S) centers, to quinones in the respiratory chain. The immediate electron acceptor for the enzyme in this species is believed to be ubiquinone. Couples the redox reaction to proton translocation (for every two electrons transferred, four hydrogen ions are translocated across the cytoplasmic membrane), and thus conserves the redox energy in a proton gradient. The sequence is that of NADH-quinone oxidoreductase subunit I from Burkholderia thailandensis (strain ATCC 700388 / DSM 13276 / CCUG 48851 / CIP 106301 / E264).